Consider the following 353-residue polypeptide: NADH-ubiquinone oxidoreductase chain 2 (353 aa).

8 consecutive transmembrane segments (helical) span residues 4 to 24, 60 to 80, 96 to 116, 139 to 159, 198 to 218, 241 to 261, 274 to 294, and 330 to 350; these read SVVL…LSSH, FLVQ…QLWL, IVLT…FWFP, FIIL…TLGC, IYVG…VFLI, GNVL…TGFL, NLLV…FFYL, and VLLS…PALW.

The protein belongs to the complex I subunit 2 family.

The protein localises to the mitochondrion inner membrane. It carries out the reaction a ubiquinone + NADH + 5 H(+)(in) = a ubiquinol + NAD(+) + 4 H(+)(out). Core subunit of the mitochondrial membrane respiratory chain NADH dehydrogenase (Complex I) that is believed to belong to the minimal assembly required for catalysis. Complex I functions in the transfer of electrons from NADH to the respiratory chain. The immediate electron acceptor for the enzyme is believed to be ubiquinone. This is NADH-ubiquinone oxidoreductase chain 2 (ND2) from Pisaster ochraceus (Ochre sea star).